Here is a 181-residue protein sequence, read N- to C-terminus: Bifunctional adenosylcobalamin biosynthesis protein CobU (181 aa).

GTP contacts are provided by residues 7 to 14 (GGARSGKS) and 31 to 33 (ATS). His47 serves as the catalytic GMP-histidine intermediate. GTP is bound by residues 48 to 51 (KDGR), Glu59, and Glu81.

This sequence belongs to the CobU/CobP family. Homotrimer.

It catalyses the reaction adenosylcob(III)inamide + GTP = adenosylcob(III)inamide phosphate + GDP + H(+). It carries out the reaction adenosylcob(III)inamide + ATP = adenosylcob(III)inamide phosphate + ADP + H(+). The enzyme catalyses adenosylcob(III)inamide phosphate + GTP + H(+) = adenosylcob(III)inamide-GDP + diphosphate. It functions in the pathway cofactor biosynthesis; adenosylcobalamin biosynthesis; adenosylcobalamin from cob(II)yrinate a,c-diamide: step 5/7. The protein operates within cofactor biosynthesis; adenosylcobalamin biosynthesis; adenosylcobalamin from cob(II)yrinate a,c-diamide: step 6/7. Functionally, catalyzes ATP-dependent phosphorylation of adenosylcobinamide and addition of GMP to adenosylcobinamide phosphate. The chain is Bifunctional adenosylcobalamin biosynthesis protein CobU (cobU) from Salmonella typhimurium (strain LT2 / SGSC1412 / ATCC 700720).